The chain runs to 229 residues: tRNA (guanine-N(1)-)-methyltransferase (229 aa).

Residues Gly-109 and 129 to 134 (IGDFIL) contribute to the S-adenosyl-L-methionine site.

Belongs to the RNA methyltransferase TrmD family. Homodimer.

It localises to the cytoplasm. The catalysed reaction is guanosine(37) in tRNA + S-adenosyl-L-methionine = N(1)-methylguanosine(37) in tRNA + S-adenosyl-L-homocysteine + H(+). In terms of biological role, specifically methylates guanosine-37 in various tRNAs. The protein is tRNA (guanine-N(1)-)-methyltransferase of Helicobacter pylori (strain Shi470).